Here is a 79-residue protein sequence, read N- to C-terminus: Protein OPG081 (79 aa).

Over 1–8 (MVDAITVL) the chain is Intravirion. The helical transmembrane segment at 9–29 (TAIGITVLMLLMVISGAAMIV) threads the bilayer. Over 30–47 (KELNPNDIFTMQSLKFNR) the chain is Virion surface. The helical transmembrane segment at 48–68 (AVTIFKYIGLFIYIPGTIILY) threads the bilayer. The Intravirion portion of the chain corresponds to 69–79 (ATYVKSLLMKS).

This sequence belongs to the orthopoxvirus OPG081 family.

The protein localises to the virion membrane. Functionally, envelope protein. The protein is Protein OPG081 (OPG081) of Vaccinia virus (strain Copenhagen) (VACV).